Reading from the N-terminus, the 717-residue chain is Cleavage stimulation factor subunit 3 (717 aa).

Serine 2 is modified (N-acetylserine). HAT repeat units lie at residues 45–77 (QPID…AEIK), 79–110 (KNYD…YVRE), 117–152 (SYKE…FLKG), 163–196 (QRIT…YEEG), 221–261 (KEYE…WEKS), 271–303 (LITK…YLEQ), 319–352 (LFSD…YEES), 354–387 (MKYE…FARR), and 458–494 (NEDN…FESN). The interval 684-705 (VKRPNEDSDEDEEKGAVVPPVH) is disordered. Phosphoserine is present on serine 691.

As to quaternary structure, homodimer. The CSTF complex is composed of CSTF1 (50 kDa subunit), CSTF2 (64 kDa subunit) and CSTF3 (77 kDa subunit). CSTF3 directly interacts with CSTF1 and CSTF2. Interacts with FIP1L1.

The protein resides in the nucleus. In terms of biological role, one of the multiple factors required for polyadenylation and 3'-end cleavage of mammalian pre-mRNAs. The protein is Cleavage stimulation factor subunit 3 (CSTF3) of Pongo abelii (Sumatran orangutan).